Consider the following 57-residue polypeptide: MPAIQPPLYLTFLLLILLYRIITLYVWIILTITYKTSVRHAALHQRSFFRWSFDHSL.

The Virion surface portion of the chain corresponds to 1 to 8; it reads MPAIQPPL. A helical membrane pass occupies residues 9–29; that stretch reads YLTFLLLILLYRIITLYVWII. Residues 30–57 are Intravirion-facing; the sequence is LTITYKTSVRHAALHQRSFFRWSFDHSL.

Belongs to the rubulavirus small hydrophobic protein family. Interacts with host TNFRSF1A, RIPK1 and IRAK1; these interactions interfere with host NF-kappa-B activation at the level of receptor complexes. Interacts with host protein UBQLN4.

The protein resides in the virion membrane. Its subcellular location is the host cell membrane. Plays a role in the inhibition of the host NF-kappa-B pathway. This inhibition occurs at the receptor level, by preventing the signaling of TNFR1 as well as IL-1R and TLR3. This chain is Small hydrophobic protein (SH), found in Homo sapiens (Human).